A 127-amino-acid polypeptide reads, in one-letter code: Small ribosomal subunit protein uS13 (127 aa).

Residues Pro-97–Arg-127 form a disordered region. Residues Gln-101–Ala-118 show a composition bias toward basic residues.

This sequence belongs to the universal ribosomal protein uS13 family. As to quaternary structure, part of the 30S ribosomal subunit. Forms a loose heterodimer with protein S19. Forms two bridges to the 50S subunit in the 70S ribosome.

Located at the top of the head of the 30S subunit, it contacts several helices of the 16S rRNA. In the 70S ribosome it contacts the 23S rRNA (bridge B1a) and protein L5 of the 50S subunit (bridge B1b), connecting the 2 subunits; these bridges are implicated in subunit movement. Contacts the tRNAs in the A and P-sites. The polypeptide is Small ribosomal subunit protein uS13 (Rhodopirellula baltica (strain DSM 10527 / NCIMB 13988 / SH1)).